Consider the following 324-residue polypeptide: Acetyl-coenzyme A carboxylase carboxyl transferase subunit alpha (324 aa).

The CoA carboxyltransferase C-terminal domain occupies 37-291 (ILEDKLENLE…NVVLQKTFEQ (255 aa)).

The protein belongs to the AccA family. In terms of assembly, acetyl-CoA carboxylase is a heterohexamer composed of biotin carboxyl carrier protein (AccB), biotin carboxylase (AccC) and two subunits each of ACCase subunit alpha (AccA) and ACCase subunit beta (AccD).

It is found in the cytoplasm. The catalysed reaction is N(6)-carboxybiotinyl-L-lysyl-[protein] + acetyl-CoA = N(6)-biotinyl-L-lysyl-[protein] + malonyl-CoA. Its pathway is lipid metabolism; malonyl-CoA biosynthesis; malonyl-CoA from acetyl-CoA: step 1/1. Component of the acetyl coenzyme A carboxylase (ACC) complex. First, biotin carboxylase catalyzes the carboxylation of biotin on its carrier protein (BCCP) and then the CO(2) group is transferred by the carboxyltransferase to acetyl-CoA to form malonyl-CoA. The polypeptide is Acetyl-coenzyme A carboxylase carboxyl transferase subunit alpha (Bacillus cytotoxicus (strain DSM 22905 / CIP 110041 / 391-98 / NVH 391-98)).